The sequence spans 607 residues: UvrABC system protein C (607 aa).

One can recognise a GIY-YIG domain in the interval 16 to 94 (GRPGVYRMFD…IKEWRPPYNI (79 aa)). One can recognise a UVR domain in the interval 203-238 (NALSDELNATMEKAAMALDFERAAELRDQVALLRRV).

Belongs to the UvrC family. As to quaternary structure, interacts with UvrB in an incision complex.

The protein resides in the cytoplasm. The UvrABC repair system catalyzes the recognition and processing of DNA lesions. UvrC both incises the 5' and 3' sides of the lesion. The N-terminal half is responsible for the 3' incision and the C-terminal half is responsible for the 5' incision. The protein is UvrABC system protein C of Pseudomonas savastanoi pv. phaseolicola (strain 1448A / Race 6) (Pseudomonas syringae pv. phaseolicola (strain 1448A / Race 6)).